The chain runs to 355 residues: MSNENNNLSLYGWSDNLFRQKQISQYKDMSHGRIIVTHKTCYEVVAEDGVYLCELTGNMIYGRVPDEYPCTGDWVIFQPFDANKGIIVDILPRERALYRKKNGRVADRQAIASYVDKAFIVQSLDDNFNVRRAERFIAQVMEEKIKPVLVLNKADLGCDRQKIDEAIKHIARQFPVFITSIRQPQTILRLRESITKGETVVFVGSSGVGKSSLVNALCGKSVLNTSDISLSTGKGRHTSTRREMVLMDGSGVLIDTPGVREFGLAIDNPDSLTEMFEISDYAESCRFSDCKHIDEPGCAVLEAVHNGTLDHKVYESYLKLRREAWHFSASEHEKRKKEKSFTKLVEEVKKRKANF.

One can recognise a CP-type G domain in the interval 103 to 262 (GRVADRQAIA…LIDTPGVREF (160 aa)). GTP is bound by residues 152–155 (NKAD) and 204–212 (GSSGVGKSS). Residues C285, C290, H292, and C298 each contribute to the Zn(2+) site.

This sequence belongs to the TRAFAC class YlqF/YawG GTPase family. RsgA subfamily. Monomer. Associates with 30S ribosomal subunit, binds 16S rRNA. Zn(2+) is required as a cofactor.

The protein localises to the cytoplasm. One of several proteins that assist in the late maturation steps of the functional core of the 30S ribosomal subunit. Helps release RbfA from mature subunits. May play a role in the assembly of ribosomal proteins into the subunit. Circularly permuted GTPase that catalyzes slow GTP hydrolysis, GTPase activity is stimulated by the 30S ribosomal subunit. The protein is Small ribosomal subunit biogenesis GTPase RsgA 1 of Bacteroides thetaiotaomicron (strain ATCC 29148 / DSM 2079 / JCM 5827 / CCUG 10774 / NCTC 10582 / VPI-5482 / E50).